Here is a 613-residue protein sequence, read N- to C-terminus: MDLFNYFRRETSEVNIGAVPLGGPNPIRIQSMTNTSTMDTEACVEQAKRIVDAGGEYVRLTTQGVKEAENLMNINIGLRSQGYMVPLVADVHFNPKVADVAAQYAEKVRINPGNYVDAARTFKKLEYTDEEYAQEIQKIHDRFVPFLNICKENHTAIRIGVNHGSLSDRIMSRYGDTPEGMVESCMEFLRICVAEHFTDVVISIKASNTVVMVKTVRLLVAVMEQEGMSFPLHLGVTEAGDGEDGRIKSALGIGALLCDGLGDTIRVSLSEAPEAEIPVARKLVDYVLLRQDHPYIPGMEAPEFNYLSPSRRKTRAVRNIGGEHLPVVIADRMDGKTEVNPQFTPDYIYAGRTLPEQREEGVEYILDADVWEGEAGTWPAFNHAQLPLMGECSAELKFLFMPYMAQTDEVIACLKVHPEVVVISQSNHPNRLGEHRALVHQLMTEGLENPVVFFQHYAEDEAEDLQIKSAVDMGALIFDGLCDGIFLFNQGSLSHAVVDATAFGILQAGRTRTSKTEYISCPGCGRTLYDLEKTIARIKAATSHLKGLKIGIMGCIVNGPGEMADADYGYVGAGRGKISLYKGKVCVEKNIPEEEAVERLLEFIRNDRKELEL.

[4Fe-4S] cluster contacts are provided by C521, C524, C555, and E562.

This sequence belongs to the IspG family. The cofactor is [4Fe-4S] cluster.

It carries out the reaction (2E)-4-hydroxy-3-methylbut-2-enyl diphosphate + oxidized [flavodoxin] + H2O + 2 H(+) = 2-C-methyl-D-erythritol 2,4-cyclic diphosphate + reduced [flavodoxin]. The protein operates within isoprenoid biosynthesis; isopentenyl diphosphate biosynthesis via DXP pathway; isopentenyl diphosphate from 1-deoxy-D-xylulose 5-phosphate: step 5/6. Functionally, converts 2C-methyl-D-erythritol 2,4-cyclodiphosphate (ME-2,4cPP) into 1-hydroxy-2-methyl-2-(E)-butenyl 4-diphosphate. The protein is 4-hydroxy-3-methylbut-2-en-1-yl diphosphate synthase (flavodoxin) of Bacteroides thetaiotaomicron (strain ATCC 29148 / DSM 2079 / JCM 5827 / CCUG 10774 / NCTC 10582 / VPI-5482 / E50).